Reading from the N-terminus, the 529-residue chain is MVNPADVPIEVSKVFDTILVLDFGSQYSHLITRRLREFNVYAEMLPCTQKISELTWKPKGIILSGGPYSVYEDGSPHVDHDIFKLNVPILGICYGMQELAWINGKGVARGDKREYGPATLNVEDSSCSLFKGVDHSQVWMSHGDKLHALPTGFKVVATSDNSPFAAISNEKENIFGIQFHPEVTHTKQGKVLLRNFAIDICQASNNWTMENFIDTEIARIQKLVGPTAEVIGAVSGGVDSTVGAKIMKEAIGDRFHAIYVDNGLMRLNETEQVYKTLTEGLGINLTVVDATDLFLGKLQGVTDPEKKRKIIGNNFIHVFEAEAAKIKPASGQEIEYLLQGTLYPDVIESISFKGPSQTIKTHHNVGGLLEDMKLKLIEPLRELFKDEVRHLGEIMGVPHDLVWRHPFPGPGLAIRVLGEVTREQLKIAREADNIFIEEIRKAGLYKDISQAFAALLPVKSVGVMGDQRTYEQVIALRAIETTDFMTADWFVFEAAFLKKTASRIVNEVDGVARVTYDITSKPPATVEWE.

The region spanning threonine 17–asparagine 206 is the Glutamine amidotransferase type-1 domain. The active-site Nucleophile is the cysteine 93. Residues histidine 180 and glutamate 182 contribute to the active site. One can recognise a GMPS ATP-PPase domain in the interval tryptophan 207–arginine 404. ATP is bound at residue serine 235–threonine 241. The XMP site is built by arginine 308, aspartate 466, lysine 521, and glutamate 527.

Homodimer. The cofactor is Mg(2+).

It is found in the cytoplasm. The protein localises to the cytosol. It carries out the reaction XMP + L-glutamine + ATP + H2O = GMP + L-glutamate + AMP + diphosphate + 2 H(+). Its pathway is purine metabolism; GMP biosynthesis; GMP from XMP (L-Gln route): step 1/1. In terms of biological role, catalyzes the conversion of xanthine monophosphate (XMP) to GMP in the presence of glutamine and ATP through an adenyl-XMP intermediate. In Debaryomyces hansenii (strain ATCC 36239 / CBS 767 / BCRC 21394 / JCM 1990 / NBRC 0083 / IGC 2968) (Yeast), this protein is GMP synthase [glutamine-hydrolyzing] (GUA1).